Reading from the N-terminus, the 247-residue chain is Cell division protein ZapD (247 aa).

It belongs to the ZapD family. As to quaternary structure, interacts with FtsZ.

It is found in the cytoplasm. Its function is as follows. Cell division factor that enhances FtsZ-ring assembly. Directly interacts with FtsZ and promotes bundling of FtsZ protofilaments, with a reduction in FtsZ GTPase activity. The polypeptide is Cell division protein ZapD (Cronobacter sakazakii (strain ATCC BAA-894) (Enterobacter sakazakii)).